Consider the following 106-residue polypeptide: Large ribosomal subunit protein uL24 (106 aa).

The protein belongs to the universal ribosomal protein uL24 family. As to quaternary structure, part of the 50S ribosomal subunit.

Its function is as follows. One of two assembly initiator proteins, it binds directly to the 5'-end of the 23S rRNA, where it nucleates assembly of the 50S subunit. Functionally, one of the proteins that surrounds the polypeptide exit tunnel on the outside of the subunit. This is Large ribosomal subunit protein uL24 from Gluconobacter oxydans (strain 621H) (Gluconobacter suboxydans).